Here is a 270-residue protein sequence, read N- to C-terminus: Nuclear receptor-interacting protein 2 (270 aa).

Basic and acidic residues predominate over residues 1-27 (MSTGQEARRDEGDSRKEQEASLRDRAH). The tract at residues 1–33 (MSTGQEARRDEGDSRKEQEASLRDRAHLSQQRQ) is disordered. The interaction with NR1F2 stretch occupies residues 61–99 (KDLQPHSVIQRRLVEGNQRRLQGESPLLQALIRGHDSSR). Positions 192–196 (LQTLL) match the LXXLL motif motif.

Interacts with NR1F2, RARA and THRB in a ligand-dependent manner. As to expression, expression is restricted to the central nervous system (neurons in the dentate gyrus of the hippocampus, the amygdala, thalamic and hypothalamic regions).

It is found in the nucleus. Functionally, down-regulates transcriptional activation by nuclear receptors, such as NR1F2. In Mus musculus (Mouse), this protein is Nuclear receptor-interacting protein 2 (Nrip2).